Here is a 457-residue protein sequence, read N- to C-terminus: Phosphomethylpyrimidine synthase (457 aa).

Substrate contacts are provided by residues asparagine 80, methionine 109, tyrosine 139, histidine 175, 195 to 197 (SRG), 236 to 239 (DSLR), and glutamate 275. Residue histidine 279 coordinates Zn(2+). Tyrosine 302 serves as a coordination point for substrate. A Zn(2+)-binding site is contributed by histidine 343. Cysteine 423, cysteine 426, and cysteine 431 together coordinate [4Fe-4S] cluster.

The protein belongs to the ThiC family. [4Fe-4S] cluster is required as a cofactor.

It catalyses the reaction 5-amino-1-(5-phospho-beta-D-ribosyl)imidazole + S-adenosyl-L-methionine = 4-amino-2-methyl-5-(phosphooxymethyl)pyrimidine + CO + 5'-deoxyadenosine + formate + L-methionine + 3 H(+). Its pathway is cofactor biosynthesis; thiamine diphosphate biosynthesis. Catalyzes the synthesis of the hydroxymethylpyrimidine phosphate (HMP-P) moiety of thiamine from aminoimidazole ribotide (AIR) in a radical S-adenosyl-L-methionine (SAM)-dependent reaction. The sequence is that of Phosphomethylpyrimidine synthase from Trichormus variabilis (strain ATCC 29413 / PCC 7937) (Anabaena variabilis).